Consider the following 289-residue polypeptide: Kinetochore-associated protein MTW1 (289 aa).

Residues 105–147 adopt a coiled-coil conformation; that stretch reads RLENQKDLVIVDENELKKSEEKLREKVNDVELAFKKNEMLLKR.

The protein belongs to the mis12 family. In terms of assembly, component of the MIND kinetochore complex, which is composed of at least MTW1, NNF1, NSL1 and DSN1.

Its subcellular location is the chromosome. It is found in the centromere. The protein localises to the kinetochore. The protein resides in the cytoplasm. It localises to the cytoskeleton. Its subcellular location is the spindle pole. Its function is as follows. Acts as an essential component of the kinetochore MIND complex, which is required for the spindle checkpoint and kinetochore integrity. MIND plays a role in establishing a bipolar spindle-kinetochore interaction by joining kinetochore subunits contacting DNA to those contacting microtubules. The protein is Kinetochore-associated protein MTW1 (MTW1) of Saccharomyces cerevisiae (strain ATCC 204508 / S288c) (Baker's yeast).